The chain runs to 339 residues: NADH-quinone oxidoreductase subunit H (339 aa).

9 helical membrane passes run 9 to 29 (IFPL…LILC), 50 to 70 (PNVV…KLLF), 82 to 102 (ILFV…WAVI), 115 to 135 (VGVL…IIAG), 161 to 181 (MGLV…SQIV), 187 to 207 (MPWW…ISVL), 235 to 255 (MGFA…SAMT), 275 to 295 (IPGF…FLWI), and 311 to 331 (GWKV…SVLI).

Belongs to the complex I subunit 1 family. NDH-1 is composed of 14 different subunits. Subunits NuoA, H, J, K, L, M, N constitute the membrane sector of the complex.

Its subcellular location is the cell inner membrane. It carries out the reaction a quinone + NADH + 5 H(+)(in) = a quinol + NAD(+) + 4 H(+)(out). In terms of biological role, NDH-1 shuttles electrons from NADH, via FMN and iron-sulfur (Fe-S) centers, to quinones in the respiratory chain. The immediate electron acceptor for the enzyme in this species is believed to be ubiquinone. Couples the redox reaction to proton translocation (for every two electrons transferred, four hydrogen ions are translocated across the cytoplasmic membrane), and thus conserves the redox energy in a proton gradient. This subunit may bind ubiquinone. The chain is NADH-quinone oxidoreductase subunit H from Rickettsia bellii (strain RML369-C).